Consider the following 1172-residue polypeptide: Lysylphosphatidylglycerol biosynthesis bifunctional protein LysX (1172 aa).

The segment at 1–34 (MGLHLTVPGLRRDGRGVQSNSHDTSSKTTADISR) is disordered. Positions 1-663 (MGLHLTVPGL…LLHHDGSAPD (663 aa)) are phosphatidylglycerol lysyltransferase. Residues 17–31 (VQSNSHDTSSKTTAD) are compositionally biased toward polar residues. The next 7 membrane-spanning stretches (helical) occupy residues 80–100 (VPAAAGWTVGVIATLSLLASV), 122–142 (FPDTNFAWSFVLALLAAALTA), 146–166 (IAWLVLLANMVLAAVVNAAEI), 177–197 (FGENLGFAVHVVAIVVLVLGY), 214–234 (AVWLAGAVVGIVASWGLVELF), 272–292 (AIFGLFGAFALIGAAIVLFLS), and 612–632 (VIPRVGVASVIAEGFLVLPFS). Positions 664-1172 (VSGLRQVGLT…TLPFPLAKPH (509 aa)) are lysine--tRNA ligase. Residues 726-804 (VSVSGRIMRI…SLIVSGWRLI (79 aa)) constitute a DNA-binding region (OB). The Mg(2+) site is built by aspartate 1084 and glutamate 1091.

It in the N-terminal section; belongs to the LPG synthetase family. This sequence in the C-terminal section; belongs to the class-II aminoacyl-tRNA synthetase family. The cofactor is Mg(2+).

It localises to the cell membrane. It catalyses the reaction tRNA(Lys) + L-lysine + ATP = L-lysyl-tRNA(Lys) + AMP + diphosphate. It carries out the reaction L-lysyl-tRNA(Lys) + a 1,2-diacyl-sn-glycero-3-phospho-(1'-sn-glycerol) = a 1,2-diacyl-sn-glycero-3-phospho-1'-(3'-O-L-lysyl)-sn-glycerol + tRNA(Lys). In terms of biological role, catalyzes the production of L-lysyl-tRNA(Lys)transfer and the transfer of a lysyl group from L-lysyl-tRNA(Lys) to membrane-bound phosphatidylglycerol (PG), which produces lysylphosphatidylglycerol (LPG), one of the components of the bacterial membrane with a positive net charge. LPG synthesis contributes to the resistance to cationic antimicrobial peptides (CAMPs) and likely protects M.tuberculosis against the CAMPs produced by competiting microorganisms (bacteriocins). In fact, the modification of anionic phosphatidylglycerol with positively charged L-lysine results in repulsion of the peptides. The polypeptide is Lysylphosphatidylglycerol biosynthesis bifunctional protein LysX (lysX) (Mycobacterium bovis (strain BCG / Pasteur 1173P2)).